A 149-amino-acid chain; its full sequence is UPF0178 protein VF_0601 (149 aa).

Belongs to the UPF0178 family.

The chain is UPF0178 protein VF_0601 from Aliivibrio fischeri (strain ATCC 700601 / ES114) (Vibrio fischeri).